A 566-amino-acid chain; its full sequence is ALBINO3-like protein 3, mitochondrial (566 aa).

Residues 1 to 44 (MAFRRVLLSHLRRSHHTCSSLSPHHVSATTQPSIALALFQSRFF) constitute a mitochondrion transit peptide. Transmembrane regions (helical) follow at residues 139–159 (WVVIATSTVAFRTALLPILIL), 207–227 (LWVPAYFSIQISCFFLWITSI), 249–269 (LTEIPNGLYGPLFPFLIAGLH), and 301–321 (LLTCALYFLSFQMPQGSLLYW). TPR repeat units lie at residues 386–419 (PKELVALSAKYLSGGHKDKSIPLLRLALEKDPEY), 420–453 (LQAMIILGQALYQKDQFAEAAKCLEQAASKLLDT), 465–498 (IVASQWAGVSNIRQGKTSEGITHLERVANMKEPD), and 507–540 (LDALVLYSSAIFNEGRREEAAKYLRRVVAYDPSF). A disordered region spans residues 547-566 (CEEDDTIPTSSSSNSTSKTS). Positions 555–566 (TSSSSNSTSKTS) are enriched in low complexity.

It belongs to the OXA1/ALB3/YidC (TC 2.A.9.2) family.

It localises to the mitochondrion inner membrane. Its function is as follows. Probably required for the insertion of integral membrane proteins into the mitochondrial inner membrane. This is ALBINO3-like protein 3, mitochondrial (ALB3L3) from Arabidopsis thaliana (Mouse-ear cress).